The chain runs to 399 residues: Protein IQ-DOMAIN 25 (399 aa).

The Nuclear localization signal motif lies at 1-8 (MRKNLTKL). Calmodulin-binding regions lie at residues 81–91 (KERRTHAIAVA) and 99–110 (DAAVAAAKAAAA). 2 consecutive IQ domains span residues 130–158 (EHRA…GVVK) and 159–181 (IQAL…SMEA). Disordered stretches follow at residues 198–219 (NGNA…ENRN), 262–302 (SPLS…SPAR), and 346–377 (LRSH…VRMQ). Over residues 285–294 (KFPTAQSTPR) the composition is skewed to polar residues.

Belongs to the IQD family. As to quaternary structure, binds to multiple calmodulin (CaM) in the presence of Ca(2+) and CaM-like proteins.

It localises to the nucleus. Its subcellular location is the cell membrane. May be involved in cooperative interactions with calmodulins or calmodulin-like proteins. Recruits calmodulin proteins to microtubules, thus being a potential scaffold in cellular signaling and trafficking. May associate with nucleic acids and regulate gene expression at the transcriptional or post-transcriptional level. This Arabidopsis thaliana (Mouse-ear cress) protein is Protein IQ-DOMAIN 25.